The primary structure comprises 387 residues: Alpha-maltose-1-phosphate synthase (387 aa).

It belongs to the glycosyltransferase group 1 family.

The catalysed reaction is ADP-alpha-D-glucose + alpha-D-glucose 1-phosphate = alpha-maltose 1-phosphate + ADP + H(+). Its pathway is glycan biosynthesis; glycogen biosynthesis. In terms of biological role, involved in the biosynthesis of the maltose-1-phosphate (M1P) building block required for alpha-glucan production by the key enzyme GlgE. Catalyzes the formation of an alpha-1,4 linkage between glucose from ADP-glucose and glucose 1-phosphate (G1P) to yield maltose-1-phosphate (M1P). In Mycolicibacterium smegmatis (strain ATCC 700084 / mc(2)155) (Mycobacterium smegmatis), this protein is Alpha-maltose-1-phosphate synthase.